A 361-amino-acid chain; its full sequence is Probable dual-specificity RNA methyltransferase RlmN (361 aa).

The active-site Proton acceptor is Glu104. The 234-residue stretch at 110–343 (HEYGNSVCVT…VTIRREQGHD (234 aa)) folds into the Radical SAM core domain. A disulfide bond links Cys117 and Cys348. Residues Cys124, Cys128, and Cys131 each coordinate [4Fe-4S] cluster. Residues 174 to 175 (GE), Ser206, 229 to 231 (SLH), and Asn305 contribute to the S-adenosyl-L-methionine site. The S-methylcysteine intermediate role is filled by Cys348.

This sequence belongs to the radical SAM superfamily. RlmN family. It depends on [4Fe-4S] cluster as a cofactor.

The protein resides in the cytoplasm. The enzyme catalyses adenosine(2503) in 23S rRNA + 2 reduced [2Fe-2S]-[ferredoxin] + 2 S-adenosyl-L-methionine = 2-methyladenosine(2503) in 23S rRNA + 5'-deoxyadenosine + L-methionine + 2 oxidized [2Fe-2S]-[ferredoxin] + S-adenosyl-L-homocysteine. The catalysed reaction is adenosine(37) in tRNA + 2 reduced [2Fe-2S]-[ferredoxin] + 2 S-adenosyl-L-methionine = 2-methyladenosine(37) in tRNA + 5'-deoxyadenosine + L-methionine + 2 oxidized [2Fe-2S]-[ferredoxin] + S-adenosyl-L-homocysteine. In terms of biological role, specifically methylates position 2 of adenine 2503 in 23S rRNA and position 2 of adenine 37 in tRNAs. The polypeptide is Probable dual-specificity RNA methyltransferase RlmN (Bacillus licheniformis (strain ATCC 14580 / DSM 13 / JCM 2505 / CCUG 7422 / NBRC 12200 / NCIMB 9375 / NCTC 10341 / NRRL NRS-1264 / Gibson 46)).